The following is a 278-amino-acid chain: Orotidine 5'-phosphate decarboxylase (278 aa).

K96 functions as the Proton donor in the catalytic mechanism.

Belongs to the OMP decarboxylase family. Type 2 subfamily.

The catalysed reaction is orotidine 5'-phosphate + H(+) = UMP + CO2. The protein operates within pyrimidine metabolism; UMP biosynthesis via de novo pathway; UMP from orotate: step 2/2. This is Orotidine 5'-phosphate decarboxylase from Salinispora arenicola (strain CNS-205).